Here is a 417-residue protein sequence, read N- to C-terminus: Serine hydroxymethyltransferase (417 aa).

(6S)-5,6,7,8-tetrahydrofolate-binding positions include Leu120 and 124–126 (GHL). Residue Lys229 is modified to N6-(pyridoxal phosphate)lysine. 354 to 356 (SPF) serves as a coordination point for (6S)-5,6,7,8-tetrahydrofolate.

Belongs to the SHMT family. As to quaternary structure, homodimer. The cofactor is pyridoxal 5'-phosphate.

Its subcellular location is the cytoplasm. It carries out the reaction (6R)-5,10-methylene-5,6,7,8-tetrahydrofolate + glycine + H2O = (6S)-5,6,7,8-tetrahydrofolate + L-serine. It functions in the pathway one-carbon metabolism; tetrahydrofolate interconversion. The protein operates within amino-acid biosynthesis; glycine biosynthesis; glycine from L-serine: step 1/1. Its function is as follows. Catalyzes the reversible interconversion of serine and glycine with tetrahydrofolate (THF) serving as the one-carbon carrier. This reaction serves as the major source of one-carbon groups required for the biosynthesis of purines, thymidylate, methionine, and other important biomolecules. Also exhibits THF-independent aldolase activity toward beta-hydroxyamino acids, producing glycine and aldehydes, via a retro-aldol mechanism. In Acinetobacter baumannii (strain AB307-0294), this protein is Serine hydroxymethyltransferase.